The sequence spans 838 residues: Glutenin, high molecular weight subunit PW212 (838 aa).

The N-terminal stretch at 1–21 is a signal peptide; sequence MAKRLVLFVAVVVALVALTVA. The disordered stretch occupies residues 122-794; it reads SYYPGQASPQ…GQQSGQGQQG (673 aa). Over residues 125-136 the composition is skewed to low complexity; the sequence is PGQASPQRPGQG. Gly residues predominate over residues 137–149; the sequence is QQPGQGQQSGQGQ. 12 stretches are compositionally biased toward low complexity: residues 150–172, 179–208, 215–245, 268–308, 315–356, 364–416, 445–473, 481–532, 549–643, 654–677, 699–719, and 729–773; these read QGYY…GQPG, QQPG…GQPG, QLQP…PGQG, QGQQ…GQSG, QQPG…PGQG, PGYY…PGQG, SPQQ…PGQG, QGQQ…YPTS, QQPG…QGQP, GQGQ…GQPG, QQPG…GQHG, and GQGQ…GQQG.

Belongs to the gliadin/glutenin family. In terms of assembly, disulfide-bridge linked aggregates.

Functionally, glutenins are high-molecular weight seed storage proteins of wheat endosperm. Thought to be responsible for the visco-elastic property of wheat dough. This chain is Glutenin, high molecular weight subunit PW212, found in Triticum aestivum (Wheat).